Reading from the N-terminus, the 309-residue chain is Ribonuclease Z (309 aa).

Positions 63, 65, 67, 68, 145, 216, and 274 each coordinate Zn(2+). Asp67 acts as the Proton acceptor in catalysis.

The protein belongs to the RNase Z family. As to quaternary structure, homodimer. Requires Zn(2+) as cofactor.

It catalyses the reaction Endonucleolytic cleavage of RNA, removing extra 3' nucleotides from tRNA precursor, generating 3' termini of tRNAs. A 3'-hydroxy group is left at the tRNA terminus and a 5'-phosphoryl group is left at the trailer molecule.. Zinc phosphodiesterase, which displays some tRNA 3'-processing endonuclease activity. Probably involved in tRNA maturation, by removing a 3'-trailer from precursor tRNA. The sequence is that of Ribonuclease Z from Streptococcus pneumoniae serotype 19F (strain G54).